Reading from the N-terminus, the 147-residue chain is C-glycoside deglycosidase beta subunit (147 aa).

It belongs to the C-glycoside deglycosidase beta subunit family. As to quaternary structure, heterooctamer composed of four alpha subunits (DfgA) and four beta subunits (DfgB). The cofactor is Mn(2+).

It carries out the reaction 3''-dehydroisoorientin = 1,5-anhydro-D-erythro-hex-1-en-3-ulose + luteolin. The catalysed reaction is 3''-dehydroisovitexin = 1,5-anhydro-D-erythro-hex-1-en-3-ulose + apigenin. With respect to regulation, activity is strongly reduced in the presence of chelating agents. Functionally, carbon-carbon bond-cleaving enzyme which participates in the metabolism of C-glycosides. Acts on the C6-glycosylated compounds 3''-dehydroisoorientin (3''-oxo-homoorientin) and 3''-dehydroisovitexin (3''-oxo-isovitexin). The sequence is that of C-glycoside deglycosidase beta subunit from Eubacterium cellulosolvens (strain ATCC 43171 / JCM 9499 / 6) (Cillobacterium cellulosolvens).